The primary structure comprises 154 residues: NADPH-dependent 7-cyano-7-deazaguanine reductase (154 aa).

C52 acts as the Thioimide intermediate in catalysis. D59 (proton donor) is an active-site residue. Substrate is bound by residues 74–76 (VES) and 93–94 (HE).

Belongs to the GTP cyclohydrolase I family. QueF type 1 subfamily.

The protein resides in the cytoplasm. It carries out the reaction 7-aminomethyl-7-carbaguanine + 2 NADP(+) = 7-cyano-7-deazaguanine + 2 NADPH + 3 H(+). It functions in the pathway tRNA modification; tRNA-queuosine biosynthesis. In terms of biological role, catalyzes the NADPH-dependent reduction of 7-cyano-7-deazaguanine (preQ0) to 7-aminomethyl-7-deazaguanine (preQ1). This is NADPH-dependent 7-cyano-7-deazaguanine reductase from Paracoccus denitrificans (strain Pd 1222).